The sequence spans 204 residues: Holliday junction branch migration complex subunit RuvA (204 aa).

Residues 1–64 (MIGRLRGIIL…EDAQLLYGFN (64 aa)) are domain I. The tract at residues 65–142 (NKQERALFRE…KGLNGDLFNN (78 aa)) is domain II. The segment at 143–155 (TGDISLPTASPQT) is flexible linker. Residues 156–204 (SDADIEAEAASALVALGYKPQEASRLVSKIAKPGADCETLIRDALRAAL) form a domain III region.

The protein belongs to the RuvA family. Homotetramer. Forms an RuvA(8)-RuvB(12)-Holliday junction (HJ) complex. HJ DNA is sandwiched between 2 RuvA tetramers; dsDNA enters through RuvA and exits via RuvB. An RuvB hexamer assembles on each DNA strand where it exits the tetramer. Each RuvB hexamer is contacted by two RuvA subunits (via domain III) on 2 adjacent RuvB subunits; this complex drives branch migration. In the full resolvosome a probable DNA-RuvA(4)-RuvB(12)-RuvC(2) complex forms which resolves the HJ.

Its subcellular location is the cytoplasm. In terms of biological role, the RuvA-RuvB-RuvC complex processes Holliday junction (HJ) DNA during genetic recombination and DNA repair, while the RuvA-RuvB complex plays an important role in the rescue of blocked DNA replication forks via replication fork reversal (RFR). RuvA specifically binds to HJ cruciform DNA, conferring on it an open structure. The RuvB hexamer acts as an ATP-dependent pump, pulling dsDNA into and through the RuvAB complex. HJ branch migration allows RuvC to scan DNA until it finds its consensus sequence, where it cleaves and resolves the cruciform DNA. This is Holliday junction branch migration complex subunit RuvA from Yersinia pseudotuberculosis serotype O:1b (strain IP 31758).